Consider the following 734-residue polypeptide: Photosystem I P700 chlorophyll a apoprotein A2 (734 aa).

8 helical membrane-spanning segments follow: residues 46–69 (IFAS…FHVA), 135–158 (LYTG…LHLQ), 175–199 (LNHH…HVAI), 273–291 (MAHH…GHMY), 330–353 (LHFQ…QHMY), 369–395 (AALY…IFFI), 417–439 (AIIS…LYVH), and 517–535 (FLVH…LILV). Residues Cys559 and Cys568 each contribute to the [4Fe-4S] cluster site. Helical transmembrane passes span 575-596 (AFYL…YWHW) and 643-665 (LSVW…MFLI). Residues His654, Met662, and Tyr670 each coordinate chlorophyll a. Trp671 provides a ligand contact to phylloquinone. Residues 707–727 (LVGLAHFSVGYIFTYAAFLIA) traverse the membrane as a helical segment.

It belongs to the PsaA/PsaB family. As to quaternary structure, the PsaA/B heterodimer binds the P700 chlorophyll special pair and subsequent electron acceptors. PSI consists of a core antenna complex that captures photons, and an electron transfer chain that converts photonic excitation into a charge separation. The eukaryotic PSI reaction center is composed of at least 11 subunits. P700 is a chlorophyll a/chlorophyll a' dimer, A0 is one or more chlorophyll a, A1 is one or both phylloquinones and FX is a shared 4Fe-4S iron-sulfur center. serves as cofactor.

It localises to the plastid. The protein localises to the chloroplast thylakoid membrane. The enzyme catalyses reduced [plastocyanin] + hnu + oxidized [2Fe-2S]-[ferredoxin] = oxidized [plastocyanin] + reduced [2Fe-2S]-[ferredoxin]. Its function is as follows. PsaA and PsaB bind P700, the primary electron donor of photosystem I (PSI), as well as the electron acceptors A0, A1 and FX. PSI is a plastocyanin-ferredoxin oxidoreductase, converting photonic excitation into a charge separation, which transfers an electron from the donor P700 chlorophyll pair to the spectroscopically characterized acceptors A0, A1, FX, FA and FB in turn. Oxidized P700 is reduced on the lumenal side of the thylakoid membrane by plastocyanin. The sequence is that of Photosystem I P700 chlorophyll a apoprotein A2 from Cucumis sativus (Cucumber).